The chain runs to 136 residues: uncharacterized protein (136 aa).

Residues 7-27 traverse the membrane as a helical segment; sequence ANVLAILLVSLFLINGLVFLS.

It is found in the membrane. This is an uncharacterized protein from Mycoplasma pneumoniae (strain ATCC 29342 / M129 / Subtype 1) (Mycoplasmoides pneumoniae).